We begin with the raw amino-acid sequence, 246 residues long: Bis(5'-nucleosyl)-tetraphosphatase PrpE [asymmetrical] (246 aa).

Belongs to the PrpE family. Requires Ni(2+) as cofactor.

It carries out the reaction P(1),P(4)-bis(5'-guanosyl) tetraphosphate + H2O = GMP + GTP + 2 H(+). Functionally, asymmetrically hydrolyzes Ap4p to yield AMP and ATP. This chain is Bis(5'-nucleosyl)-tetraphosphatase PrpE [asymmetrical], found in Halalkalibacterium halodurans (strain ATCC BAA-125 / DSM 18197 / FERM 7344 / JCM 9153 / C-125) (Bacillus halodurans).